Here is a 77-residue protein sequence, read N- to C-terminus: ATP synthase subunit 9, mitochondrial (77 aa).

The next 2 membrane-spanning stretches (helical) occupy residues 8–28 (MGAG…GNVL) and 45–72 (LFGY…LISF).

It belongs to the ATPase C chain family. F-type ATPases have 2 components, CF(1) - the catalytic core - and CF(0) - the membrane proton channel. CF(1) has five subunits: alpha(3), beta(3), gamma(1), delta(1), epsilon(1). CF(0) has three main subunits: a, b and c.

It localises to the mitochondrion membrane. Functionally, this protein is one of the chains of the nonenzymatic membrane component (F0) of mitochondrial ATPase. In Petunia sp. (Petunia), this protein is ATP synthase subunit 9, mitochondrial (ATP9).